The primary structure comprises 1129 residues: Regulator of nonsense transcripts 1 (1129 aa).

The tract at residues 1–415 is sufficient for interaction with RENT2; the sequence is MSVEAYGPSS…LRSSVGAPVE (415 aa). 2 positions are modified to phosphoserine: Ser10 and Ser31. A disordered region spans residues 39-70; sequence TLPSQTQTPPGGPGGPGGGGAGGPGGAGAGAA. A compositionally biased stretch (gly residues) spans 52–69; that stretch reads GGPGGGGAGGPGGAGAGA. Positions 115-272 constitute a Upf1 CH-rich domain; sequence TKDLPIHACS…NKLEELWKEN (158 aa). Positions 123, 126, 137, 140, 145, 155, 159, 165, 183, 186, 209, and 213 each coordinate Zn(2+). The interval 123–155 is C3H; the sequence is CSYCGIHDPACVVYCNTSKKWFCNGRGNTSGSH. A CC/SHH/C region spans residues 137–165; sequence CNTSKKWFCNGRGNTSGSHIVNHLVRAKC. The tract at residues 183–213 is C4; that stretch reads CYNCGCRNVFLLGFIPAKADSVVVLLCRQPC. Residues Gln486 and 506 to 510 each bind ATP; that span reads GTGKT. Ser565 is modified (phosphoserine). Gln676, Tyr713, and Glu844 together coordinate ATP. Residue Ser956 is modified to Phosphoserine. 2 disordered regions span residues 1009–1058 and 1073–1096; these read FGQA…VASQ and SQPS…YLGD. The residue at position 1019 (Arg1019) is an Omega-N-methylarginine. Positions 1025–1034 are enriched in basic residues; sequence KTGRGGRQKN. The segment covering 1041–1058 has biased composition (polar residues); that stretch reads PSQTNLPNSQASQDVASQ. The span at 1073 to 1086 shows a compositional bias: low complexity; sequence SQPSQMSQPGLSQP. Phosphoserine occurs at positions 1089, 1107, 1110, and 1127. Short sequence motifs ([ST]-Q motif) lie at residues 1089–1090 and 1107–1108; these read SQ. Positions 1110–1129 are disordered; that stretch reads STYQGERAYQHGGVTGLSQY.

This sequence belongs to the DNA2/NAM7 helicase family. As to quaternary structure, found in a post-splicing messenger ribonucleoprotein (mRNP) complex. Associates with the exon junction complex (EJC). Associates with the SGM1C complex; is phosphorylated by the complex kinase component SGM1. Part of a complex composed of SMG1, DHX34 and UPF1; within the complex DHX34 acts as a scaffolding protein to facilitate SMG1 phosphorylation of UPF1. Interacts with UPF2. Interacts with UPF3A and UPF3B. Interacts with EST1A. Interacts with SLBP. Interacts (when hyperphosphorylated) with PNRC2. Interacts with AGO1 and AGO2. Interacts with GSPT2. Interacts with isoform 1 and isoform 5 of ADAR/ADAR1. Interacts with SMG7. Interacts with ZC3H12A; this interaction occurs in a mRNA translationally active- and termination-dependent manner and is essential for ZC3H12A-mediated degradation of target mRNAs. Interacts with CPSF6. Interacts with MOV10; the interaction is direct and RNA-dependent. Interacts with SHFL; the interaction increases in the presence of RNA. Interacts with UPF2 and DDX4; interactions are mediated by TDRD6. Interacts with DHX34 and PABPC1/PABP1; the interactions are RNA-independent. Interacts with RBM46. (Microbial infection) Interacts with human T-cell leukemia virus 1/HTLV-1 protein Tax; this interaction inhibits the host nonsense-mediated mRNA decay (NMD). Post-translationally, phosphorylated by SMG1; required for formation of mRNA surveillance complexes. As to expression, ubiquitous.

Its subcellular location is the cytoplasm. The protein resides in the P-body. The protein localises to the nucleus. It localises to the perinuclear region. The catalysed reaction is ATP + H2O = ADP + phosphate + H(+). RNA-dependent helicase required for nonsense-mediated decay (NMD) of aberrant mRNAs containing premature stop codons and modulates the expression level of normal mRNAs. Is recruited to mRNAs upon translation termination and undergoes a cycle of phosphorylation and dephosphorylation; its phosphorylation appears to be a key step in NMD. Recruited by release factors to stalled ribosomes together with the SMG1C protein kinase complex to form the transient SURF (SMG1-UPF1-eRF1-eRF3) complex. In EJC-dependent NMD, the SURF complex associates with the exon junction complex (EJC) (located 50-55 or more nucleotides downstream from the termination codon) through UPF2 and allows the formation of an UPF1-UPF2-UPF3 surveillance complex which is believed to activate NMD. Phosphorylated UPF1 is recognized by EST1B/SMG5, SMG6 and SMG7 which are thought to provide a link to the mRNA degradation machinery involving exonucleolytic and endonucleolytic pathways, and to serve as adapters to protein phosphatase 2A (PP2A), thereby triggering UPF1 dephosphorylation and allowing the recycling of NMD factors. UPF1 can also activate NMD without UPF2 or UPF3, and in the absence of the NMD-enhancing downstream EJC indicative for alternative NMD pathways. Plays a role in replication-dependent histone mRNA degradation at the end of phase S; the function is independent of UPF2. For the recognition of premature termination codons (PTC) and initiation of NMD a competitive interaction between UPF1 and PABPC1 with the ribosome-bound release factors is proposed. The ATPase activity of UPF1 is required for disassembly of mRNPs undergoing NMD. Together with UPF2 and dependent on TDRD6, mediates the degradation of mRNA harboring long 3'UTR by inducing the NMD machinery. Also capable of unwinding double-stranded DNA and translocating on single-stranded DNA. The sequence is that of Regulator of nonsense transcripts 1 from Homo sapiens (Human).